The primary structure comprises 401 residues: 8-amino-7-oxononanoate synthase (401 aa).

Arginine 24 serves as a coordination point for substrate. Pyridoxal 5'-phosphate is bound at residue 111-112; it reads GF. Substrate is bound at residue histidine 137. Positions 183, 211, and 240 each coordinate pyridoxal 5'-phosphate. Position 243 is an N6-(pyridoxal phosphate)lysine (lysine 243). Threonine 357 is a substrate binding site.

The protein belongs to the class-II pyridoxal-phosphate-dependent aminotransferase family. BioF subfamily. As to quaternary structure, homodimer. Pyridoxal 5'-phosphate serves as cofactor.

The catalysed reaction is 6-carboxyhexanoyl-[ACP] + L-alanine + H(+) = (8S)-8-amino-7-oxononanoate + holo-[ACP] + CO2. Its pathway is cofactor biosynthesis; biotin biosynthesis. Functionally, catalyzes the decarboxylative condensation of pimeloyl-[acyl-carrier protein] and L-alanine to produce 8-amino-7-oxononanoate (AON), [acyl-carrier protein], and carbon dioxide. The polypeptide is 8-amino-7-oxononanoate synthase (Xanthomonas campestris pv. campestris (strain 8004)).